The primary structure comprises 253 residues: Sporulated oocyst TA4 antigen (253 aa).

The first 23 residues, 1-23 (MARLSFVSLLSLSLLFGQQAVRA), serve as a signal peptide directing secretion. A propeptide spans 182–184 (RRL) (removed in mature form).

As to quaternary structure, the TA4 antigen is composed of a 17 kDa and a 8 kDa chain, linked by a disulfide bond.

The sequence is that of Sporulated oocyst TA4 antigen from Eimeria tenella (Coccidian parasite).